The chain runs to 298 residues: Plasmodesmata-located protein 7 (298 aa).

The N-terminal stretch at 1 to 30 (MPMAKLRNIIKTLSIFFFLIAATAPSLSSA) is a signal peptide. Residues 31–258 (TSATDTFVFG…YKTNYGGEKT (228 aa)) are Extracellular-facing. Gnk2-homologous domains are found at residues 35–139 (DTFV…NISF) and 140–240 (LGQE…TDGA). 6 disulfide bridges follow: C42/C117, C93/C102, C105/C130, C152/C218, C194/C203, and C206/C231. Residues 259 to 279 (FAIIIGLLAAVVLLIIFLLFL) traverse the membrane as a helical segment. The tract at residues 259 to 279 (FAIIIGLLAAVVLLIIFLLFL) is necessary and sufficient for plasmodesmal targeting. The Cytoplasmic segment spans residues 280 to 298 (RGVCSRGGDFSILHSFTLI).

This sequence belongs to the cysteine-rich repeat secretory protein family. Plasmodesmata-located proteins (PDLD) subfamily. As to quaternary structure, (Microbial infection) Interacts with Grapevine fanleaf virus (GFLV) 2B-MP. Highly expressed in lateral root and elongation zone.

It is found in the cell membrane. The protein resides in the cell junction. The protein localises to the plasmodesma. Modulates cell-to-cell trafficking. The protein is Plasmodesmata-located protein 7 of Arabidopsis thaliana (Mouse-ear cress).